We begin with the raw amino-acid sequence, 481 residues long: Glycogen synthase (481 aa).

Residue Lys-15 participates in ADP-alpha-D-glucose binding.

Belongs to the glycosyltransferase 1 family. Bacterial/plant glycogen synthase subfamily.

It catalyses the reaction [(1-&gt;4)-alpha-D-glucosyl](n) + ADP-alpha-D-glucose = [(1-&gt;4)-alpha-D-glucosyl](n+1) + ADP + H(+). Its pathway is glycan biosynthesis; glycogen biosynthesis. Functionally, synthesizes alpha-1,4-glucan chains using ADP-glucose. This Thermosipho melanesiensis (strain DSM 12029 / CIP 104789 / BI429) protein is Glycogen synthase.